Here is a 222-residue protein sequence, read N- to C-terminus: Histidine biosynthesis bifunctional protein HisIE (222 aa).

Residues 1 to 128 form a phosphoribosyl-AMP cyclohydrolase region; it reads MQPLSPAFID…SLTLPPPMDA (128 aa). A phosphoribosyl-ATP pyrophosphohydrolase region spans residues 129–222; it reads CSELFRVIDQ…ANRRGAPRRN (94 aa).

This sequence in the N-terminal section; belongs to the PRA-CH family. The protein in the C-terminal section; belongs to the PRA-PH family.

The protein resides in the cytoplasm. It carries out the reaction 1-(5-phospho-beta-D-ribosyl)-ATP + H2O = 1-(5-phospho-beta-D-ribosyl)-5'-AMP + diphosphate + H(+). The enzyme catalyses 1-(5-phospho-beta-D-ribosyl)-5'-AMP + H2O = 1-(5-phospho-beta-D-ribosyl)-5-[(5-phospho-beta-D-ribosylamino)methylideneamino]imidazole-4-carboxamide. Its pathway is amino-acid biosynthesis; L-histidine biosynthesis; L-histidine from 5-phospho-alpha-D-ribose 1-diphosphate: step 2/9. The protein operates within amino-acid biosynthesis; L-histidine biosynthesis; L-histidine from 5-phospho-alpha-D-ribose 1-diphosphate: step 3/9. This is Histidine biosynthesis bifunctional protein HisIE from Prochlorococcus marinus (strain MIT 9313).